The chain runs to 310 residues: Elongation factor Ts (310 aa).

Residues 80–83 are involved in Mg(2+) ion dislocation from EF-Tu; sequence TDFV.

It belongs to the EF-Ts family.

The protein localises to the cytoplasm. In terms of biological role, associates with the EF-Tu.GDP complex and induces the exchange of GDP to GTP. It remains bound to the aminoacyl-tRNA.EF-Tu.GTP complex up to the GTP hydrolysis stage on the ribosome. The protein is Elongation factor Ts of Methylocella silvestris (strain DSM 15510 / CIP 108128 / LMG 27833 / NCIMB 13906 / BL2).